Reading from the N-terminus, the 190-residue chain is Jupiter microtubule associated homolog 2 (190 aa).

The residue at position 1 (Met-1) is an N-acetylmethionine. The span at Met-1–Arg-15 shows a compositional bias: polar residues. The interval Met-1 to Tyr-190 is disordered. Lys-11 bears the N6-acetyllysine mark. Position 30 is a phosphoserine (Ser-30). The span at Ile-35–Ala-44 shows a compositional bias: polar residues. 3 positions are modified to phosphoserine: Ser-45, Ser-69, and Ser-97. Composition is skewed to basic and acidic residues over residues Lys-110 to Ala-129 and Glu-138 to Ile-153. At Ser-144 the chain carries Phosphoserine.

Belongs to the JUPITER family. As to quaternary structure, monomer. Dimer. Interacts with TPCN1.

The protein resides in the cytoplasm. It is found in the nucleus. Its function is as follows. Nicotinic acid adenine dinucleotide phosphate (NAADP) binding protein required for NAADP-evoked intracellular calcium release. Confers NAADP-sensitivity to the two pore channels (TPCs) complex. Enables NAADP to activate Ca(2+) release from the endoplasmic reticulum through ryanodine receptors. The protein is Jupiter microtubule associated homolog 2 of Mus musculus (Mouse).